A 399-amino-acid chain; its full sequence is Formate-dependent phosphoribosylglycinamide formyltransferase (399 aa).

N(1)-(5-phospho-beta-D-ribosyl)glycinamide-binding positions include 22–23 (EL) and E82. Residues R114, K155, 160–165 (SSGKGQ), 195–198 (EKMI), and E203 contribute to the ATP site. One can recognise an ATP-grasp domain in the interval 119-308 (RLAAETLHLL…EFALHVRAFL (190 aa)). Positions 267 and 279 each coordinate Mg(2+). N(1)-(5-phospho-beta-D-ribosyl)glycinamide is bound by residues D286, K355, and 362-363 (RR).

The protein belongs to the PurK/PurT family. As to quaternary structure, homodimer.

The enzyme catalyses N(1)-(5-phospho-beta-D-ribosyl)glycinamide + formate + ATP = N(2)-formyl-N(1)-(5-phospho-beta-D-ribosyl)glycinamide + ADP + phosphate + H(+). Its pathway is purine metabolism; IMP biosynthesis via de novo pathway; N(2)-formyl-N(1)-(5-phospho-D-ribosyl)glycinamide from N(1)-(5-phospho-D-ribosyl)glycinamide (formate route): step 1/1. Involved in the de novo purine biosynthesis. Catalyzes the transfer of formate to 5-phospho-ribosyl-glycinamide (GAR), producing 5-phospho-ribosyl-N-formylglycinamide (FGAR). Formate is provided by PurU via hydrolysis of 10-formyl-tetrahydrofolate. The protein is Formate-dependent phosphoribosylglycinamide formyltransferase of Proteus mirabilis (strain HI4320).